A 282-amino-acid polypeptide reads, in one-letter code: uncharacterized protein (282 aa).

This sequence to M.tuberculosis Rv2161c and Rv3079c.

This is an uncharacterized protein from Mycobacterium tuberculosis (strain CDC 1551 / Oshkosh).